Consider the following 374-residue polypeptide: uncharacterized protein (374 aa).

The segment covering 86 to 104 (RPAATAGTTPATGASGSAR) has biased composition (low complexity). The interval 86–109 (RPAATAGTTPATGASGSARPTDAA) is disordered. The region spanning 179–354 (WWRRSNTTRG…LQRVVFAVHG (176 aa)) is the Macro domain.

This is an uncharacterized protein from Mycobacterium tuberculosis (strain CDC 1551 / Oshkosh).